Reading from the N-terminus, the 123-residue chain is Large ribosomal subunit protein bL12 (123 aa).

Belongs to the bacterial ribosomal protein bL12 family. In terms of assembly, homodimer. Part of the ribosomal stalk of the 50S ribosomal subunit. Forms a multimeric L10(L12)X complex, where L10 forms an elongated spine to which 2 to 4 L12 dimers bind in a sequential fashion. Binds GTP-bound translation factors.

Functionally, forms part of the ribosomal stalk which helps the ribosome interact with GTP-bound translation factors. Is thus essential for accurate translation. The chain is Large ribosomal subunit protein bL12 from Neisseria meningitidis serogroup C (strain 053442).